A 256-amino-acid polypeptide reads, in one-letter code: Thiazole synthase (256 aa).

Catalysis depends on K95, which acts as the Schiff-base intermediate with DXP. 1-deoxy-D-xylulose 5-phosphate contacts are provided by residues G156, 182-183 (AG), and 204-205 (NT).

The protein belongs to the ThiG family. As to quaternary structure, homotetramer. Forms heterodimers with either ThiH or ThiS.

The protein resides in the cytoplasm. The enzyme catalyses [ThiS sulfur-carrier protein]-C-terminal-Gly-aminoethanethioate + 2-iminoacetate + 1-deoxy-D-xylulose 5-phosphate = [ThiS sulfur-carrier protein]-C-terminal Gly-Gly + 2-[(2R,5Z)-2-carboxy-4-methylthiazol-5(2H)-ylidene]ethyl phosphate + 2 H2O + H(+). It participates in cofactor biosynthesis; thiamine diphosphate biosynthesis. Functionally, catalyzes the rearrangement of 1-deoxy-D-xylulose 5-phosphate (DXP) to produce the thiazole phosphate moiety of thiamine. Sulfur is provided by the thiocarboxylate moiety of the carrier protein ThiS. In vitro, sulfur can be provided by H(2)S. This is Thiazole synthase from Shigella boydii serotype 18 (strain CDC 3083-94 / BS512).